The primary structure comprises 288 residues: B3 domain-containing protein At2g35310 (288 aa).

2 consecutive DNA-binding regions (TF-B3) follow at residues 19–114 (FFKV…FMQD) and 196–288 (AEFS…VSKP).

It localises to the nucleus. This Arabidopsis thaliana (Mouse-ear cress) protein is B3 domain-containing protein At2g35310.